The following is a 251-amino-acid chain: Diphthine synthase (251 aa).

S-adenosyl-L-methionine contacts are provided by residues leucine 9, aspartate 85, valine 88, 113–114 (SI), leucine 165, alanine 202, and histidine 227.

The protein belongs to the diphthine synthase family. Homodimer.

It catalyses the reaction 2-[(3S)-amino-3-carboxypropyl]-L-histidyl-[translation elongation factor 2] + 3 S-adenosyl-L-methionine = diphthine-[translation elongation factor 2] + 3 S-adenosyl-L-homocysteine + 3 H(+). It functions in the pathway protein modification; peptidyl-diphthamide biosynthesis. In terms of biological role, S-adenosyl-L-methionine-dependent methyltransferase that catalyzes the trimethylation of the amino group of the modified target histidine residue in translation elongation factor 2 (EF-2), to form an intermediate called diphthine. The three successive methylation reactions represent the second step of diphthamide biosynthesis. In Methanosphaerula palustris (strain ATCC BAA-1556 / DSM 19958 / E1-9c), this protein is Diphthine synthase.